A 200-amino-acid polypeptide reads, in one-letter code: 3-isopropylmalate dehydratase small subunit (200 aa).

The protein belongs to the LeuD family. LeuD type 1 subfamily. As to quaternary structure, heterodimer of LeuC and LeuD.

It catalyses the reaction (2R,3S)-3-isopropylmalate = (2S)-2-isopropylmalate. It functions in the pathway amino-acid biosynthesis; L-leucine biosynthesis; L-leucine from 3-methyl-2-oxobutanoate: step 2/4. In terms of biological role, catalyzes the isomerization between 2-isopropylmalate and 3-isopropylmalate, via the formation of 2-isopropylmaleate. This Yersinia pestis bv. Antiqua (strain Antiqua) protein is 3-isopropylmalate dehydratase small subunit.